A 160-amino-acid chain; its full sequence is Cyclic pyranopterin monophosphate synthase (160 aa).

Residues 76–78 and 114–115 each bind substrate; these read LCH and ME. Residue aspartate 129 is part of the active site.

Belongs to the MoaC family. In terms of assembly, homohexamer; trimer of dimers.

It catalyses the reaction (8S)-3',8-cyclo-7,8-dihydroguanosine 5'-triphosphate = cyclic pyranopterin phosphate + diphosphate. It functions in the pathway cofactor biosynthesis; molybdopterin biosynthesis. Its function is as follows. Catalyzes the conversion of (8S)-3',8-cyclo-7,8-dihydroguanosine 5'-triphosphate to cyclic pyranopterin monophosphate (cPMP). The sequence is that of Cyclic pyranopterin monophosphate synthase from Saccharophagus degradans (strain 2-40 / ATCC 43961 / DSM 17024).